The following is a 994-amino-acid chain: Regulator of telomere elongation helicase 1 homolog (994 aa).

Positions 15-300 (PKLSVKFPFE…EETARSEADA (286 aa)) constitute a Helicase ATP-binding domain. Residue 50–57 (SPTGTGKT) coordinates ATP. [4Fe-4S] cluster is bound by residues C142, C160, C169, and C208. A DEAH box motif is present at residues 251 to 254 (DEAH). The disordered stretch occupies residues 876–895 (FKIETPGPSTSTLTQKSEPP). The segment covering 882–892 (GPSTSTLTQKS) has biased composition (polar residues).

The protein belongs to the helicase family. RAD3/XPD subfamily.

The protein resides in the nucleus. The enzyme catalyses ATP + H2O = ADP + phosphate + H(+). In terms of biological role, a probable ATP-dependent DNA helicase implicated in DNA repair and the maintenance of genomic stability. Acts as an anti-recombinase to counteract toxic recombination and limit crossover during meiosis. Regulates meiotic recombination and crossover homeostasis by physically dissociating strand invasion events and thereby promotes noncrossover repair by meiotic synthesis dependent strand annealing (SDSA) as well as disassembly of D loop recombination intermediates. This Caenorhabditis elegans protein is Regulator of telomere elongation helicase 1 homolog.